The primary structure comprises 364 residues: Aminomethyltransferase (364 aa).

The protein belongs to the GcvT family. The glycine cleavage system is composed of four proteins: P, T, L and H.

It carries out the reaction N(6)-[(R)-S(8)-aminomethyldihydrolipoyl]-L-lysyl-[protein] + (6S)-5,6,7,8-tetrahydrofolate = N(6)-[(R)-dihydrolipoyl]-L-lysyl-[protein] + (6R)-5,10-methylene-5,6,7,8-tetrahydrofolate + NH4(+). The glycine cleavage system catalyzes the degradation of glycine. The protein is Aminomethyltransferase of Shewanella halifaxensis (strain HAW-EB4).